The sequence spans 401 residues: Nodal homolog 3-C (401 aa).

The first 18 residues, 1 to 18, serve as a signal peptide directing secretion; it reads MAFLSLFLCLVFSSPLMA. Residues 19 to 274 constitute a propeptide that is removed on maturation; sequence MPPALQGRKA…KVNGFRRLRR (256 aa). N-linked (GlcNAc...) asparagine glycosylation is found at N168, N337, and N344. 2 disulfide bridges follow: C299/C365 and C328/C396.

This sequence belongs to the TGF-beta family. As to quaternary structure, monomer. The propeptide region interacts with bmp4 in a non-covalent manner. Expressed in the dorsal marginal region of late blastula, becoming restricted to the Spemann organizer at the early gastrula stage.

The protein resides in the secreted. In terms of biological role, exhibits mesoderm-dorsalizing activity and neural-inducing activity, but lacks mesoderm-inducing activity. Regulates the expression of specific mesodermal and neural genes. Induces convergent extension movements at the embryonic midline by activating the fgf signaling pathway to induce t/bra expression in the organizer region. Acts with wnt11 to induce Spemann organizer cells and induce axis formation. The unprocessed protein antagonizes bmp-signaling. This is Nodal homolog 3-C from Xenopus tropicalis (Western clawed frog).